We begin with the raw amino-acid sequence, 155 residues long: Protein SprT-like (155 aa).

The 139-residue stretch at 7 to 145 folds into the SprT-like domain; sequence QRHMEEVSLQ…GSCGGKLIQT (139 aa). H67 lines the Zn(2+) pocket. E68 is an active-site residue. Residue H71 coordinates Zn(2+).

It belongs to the SprT family. The cofactor is Zn(2+).

The protein resides in the cytoplasm. This Listeria monocytogenes serovar 1/2a (strain ATCC BAA-679 / EGD-e) protein is Protein SprT-like.